Consider the following 1194-residue polypeptide: Chitin synthase C (1194 aa).

2 disordered regions span residues 1-91 (MSLP…PNYL) and 136-177 (GAHG…RRKA). Positions 12 to 23 (PRREETSAFREP) are enriched in basic and acidic residues. Residues 42 to 54 (PRHHRHHRSHSSR) show a composition bias toward basic residues. Composition is skewed to basic and acidic residues over residues 55 to 69 (HQHD…EGGI) and 76 to 85 (VKPERGRMDP). Over residues 150-164 (TRHRSKKRKGSRKIS) the composition is skewed to basic residues. A helical transmembrane segment spans residues 221-241 (IGLISIILMIAAFVGFLTFGF). Residues N351 and N390 are each glycosylated (N-linked (GlcNAc...) asparagine). A helical transmembrane segment spans residues 476–496 (YVSLIFILSIVIVKFAFALLF). N582, N608, N885, and N1014 each carry an N-linked (GlcNAc...) asparagine glycan. 3 helical membrane passes run 1039–1059 (FVIF…SFTI), 1073–1093 (IIPL…VVVT), and 1097–1117 (LVYV…NFVL).

This sequence belongs to the chitin synthase family. Class V subfamily.

The protein resides in the cell membrane. It carries out the reaction [(1-&gt;4)-N-acetyl-beta-D-glucosaminyl](n) + UDP-N-acetyl-alpha-D-glucosamine = [(1-&gt;4)-N-acetyl-beta-D-glucosaminyl](n+1) + UDP + H(+). Functionally, polymerizes chitin, a structural polymer of the cell wall and septum, by transferring the sugar moiety of UDP-GlcNAc to the non-reducing end of the growing chitin polymer. Responsible for synthesis of 30-40% of the chitin in the cells. ChsA and chsD play redundant functions in conidia formation. The chitin synthesized by the chsD-encoded isozyme contributes to the rigidity of the walls of germinating conidia, of the subapical region of hyphae, and of conidiophore vesicles, but is not necessary for normal morphology of these cells. This is Chitin synthase C from Emericella nidulans (strain FGSC A4 / ATCC 38163 / CBS 112.46 / NRRL 194 / M139) (Aspergillus nidulans).